The sequence spans 247 residues: Ubiquinone biosynthesis O-methyltransferase (247 aa).

Positions 41, 72, 93, and 136 each coordinate S-adenosyl-L-methionine.

The protein belongs to the methyltransferase superfamily. UbiG/COQ3 family.

It carries out the reaction a 3-demethylubiquinol + S-adenosyl-L-methionine = a ubiquinol + S-adenosyl-L-homocysteine + H(+). The enzyme catalyses a 3-(all-trans-polyprenyl)benzene-1,2-diol + S-adenosyl-L-methionine = a 2-methoxy-6-(all-trans-polyprenyl)phenol + S-adenosyl-L-homocysteine + H(+). It functions in the pathway cofactor biosynthesis; ubiquinone biosynthesis. Functionally, O-methyltransferase that catalyzes the 2 O-methylation steps in the ubiquinone biosynthetic pathway. This chain is Ubiquinone biosynthesis O-methyltransferase, found in Bartonella quintana (strain Toulouse) (Rochalimaea quintana).